We begin with the raw amino-acid sequence, 208 residues long: FMN-dependent NADH:quinone oxidoreductase 1 (208 aa).

FMN is bound at residue 17 to 19 (SVS).

Belongs to the azoreductase type 1 family. As to quaternary structure, homodimer. FMN serves as cofactor.

The catalysed reaction is 2 a quinone + NADH + H(+) = 2 a 1,4-benzosemiquinone + NAD(+). The enzyme catalyses N,N-dimethyl-1,4-phenylenediamine + anthranilate + 2 NAD(+) = 2-(4-dimethylaminophenyl)diazenylbenzoate + 2 NADH + 2 H(+). Functionally, quinone reductase that provides resistance to thiol-specific stress caused by electrophilic quinones. Also exhibits azoreductase activity. Catalyzes the reductive cleavage of the azo bond in aromatic azo compounds to the corresponding amines. This is FMN-dependent NADH:quinone oxidoreductase 1 from Listeria monocytogenes serovar 1/2a (strain ATCC BAA-679 / EGD-e).